A 145-amino-acid chain; its full sequence is Large ribosomal subunit protein uL15 (145 aa).

The interval 20-39 (GRVGKHRKHPSGRGNAGGEH) is disordered.

It belongs to the universal ribosomal protein uL15 family.

This is Large ribosomal subunit protein uL15 (RPL27A) from Trypanosoma brucei brucei.